Reading from the N-terminus, the 556-residue chain is MQYSIQKFLNEGAYKLQHIGINNPKLEARILLQHAINKPYEYLLANPEKQLNQLEIEAVEKVLERRLKHEPIAYILGTKEFYSREFIVNKHVLIPRNDTEILIDVVLQYHSQHSLCHSSNGGNPDKKQLDSVVKPRNNIKSSNILELGTGSGCISISLLLELPNSQITATDISIDAIEVAKSNAIKHDVTDRLQIIHSNWFENIGKQKFDLIVSNPPYISINEKPEMAIETINYEPSIALFAEEDGLLSYKIIAENAKKFLKQNGKIILEIGYKQADQVSQIFLDHGYVIDNIHQDLQSHNRVIEISLIQLNRSYARRIGKSLSGIQQNLLDNELPKYLFSKEKLIGKNYNSCKIKSNYTKFNLEKSKESVSRGAERIKIREHLRTYKEDVANFSSSTSIFLEIGFGMGEHFINQAKMNPDKLFIGVEVYLNGVANVLKLAEEQNITNFLLFPNNLDFILHDLPNNSLDRIYILFPDPWIKNRQKKKRILNKERLTILQTKLKNKGSLIFTSDIENYFEEVVELIKQNGNFQITNEDNYSKPHDNYIITKIPPKSY.

The tract at residues 1-310 is RF MTase; the sequence is MQYSIQKFLN…NRVIEISLIQ (310 aa). S-adenosyl-L-methionine is bound by residues 148–152, D171, W200, and N215; that span reads GTGSG. Residue 215-218 participates in substrate binding; that stretch reads NPPY. A tRNA MTase region spans residues 313 to 556; that stretch reads RSYARRIGKS…IITKIPPKSY (244 aa). Residues 348–399 are insert; it reads KNYNSCKIKSNYTKFNLEKSKESVSRGAERIKIREHLRTYKEDVANFSSSTS. S-adenosyl-L-methionine is bound by residues E403, E428, N455, and D477. The active site involves D477. The substrate site is built by K481 and D513.

This sequence in the C-terminal section; belongs to the class I-like SAM-binding methyltransferase superfamily. TrmB family. It in the N-terminal section; belongs to the protein N5-glutamine methyltransferase family. PrmC subfamily.

The catalysed reaction is L-glutaminyl-[peptide chain release factor] + S-adenosyl-L-methionine = N(5)-methyl-L-glutaminyl-[peptide chain release factor] + S-adenosyl-L-homocysteine + H(+). It catalyses the reaction guanosine(46) in tRNA + S-adenosyl-L-methionine = N(7)-methylguanosine(46) in tRNA + S-adenosyl-L-homocysteine. Functionally, methylates the class 1 translation termination release factors RF1/PrfA and RF2/PrfB on the glutamine residue of the universally conserved GGQ motif. In terms of biological role, catalyzes the formation of N(7)-methylguanine at position 46 (m7G46) in tRNA. This is Bifunctional methyltransferase (prmC/trmB) from Rickettsia bellii (strain RML369-C).